We begin with the raw amino-acid sequence, 338 residues long: Holliday junction branch migration complex subunit RuvB (338 aa).

A large ATPase domain (RuvB-L) region spans residues 1-181; the sequence is MEERILTQNF…FGVINRLDYY (181 aa). Residues Leu-20, Arg-21, Gly-62, Lys-65, Thr-66, Thr-67, 128 to 130, Arg-171, Tyr-181, and Arg-218 each bind ATP; that span reads EDF. Position 66 (Thr-66) interacts with Mg(2+). Residues 182–252 are small ATPAse domain (RuvB-S); that stretch reads SVEELKEIIK…TANIALNMLG (71 aa). The interval 255 to 338 is head domain (RuvB-H); the sequence is EMGLEEIDRK…YVEQRRIEDV (84 aa). 2 residues coordinate DNA: Arg-310 and Arg-315.

Belongs to the RuvB family. As to quaternary structure, homohexamer. Forms an RuvA(8)-RuvB(12)-Holliday junction (HJ) complex. HJ DNA is sandwiched between 2 RuvA tetramers; dsDNA enters through RuvA and exits via RuvB. An RuvB hexamer assembles on each DNA strand where it exits the tetramer. Each RuvB hexamer is contacted by two RuvA subunits (via domain III) on 2 adjacent RuvB subunits; this complex drives branch migration. In the full resolvosome a probable DNA-RuvA(4)-RuvB(12)-RuvC(2) complex forms which resolves the HJ.

The protein resides in the cytoplasm. The enzyme catalyses ATP + H2O = ADP + phosphate + H(+). In terms of biological role, the RuvA-RuvB-RuvC complex processes Holliday junction (HJ) DNA during genetic recombination and DNA repair, while the RuvA-RuvB complex plays an important role in the rescue of blocked DNA replication forks via replication fork reversal (RFR). RuvA specifically binds to HJ cruciform DNA, conferring on it an open structure. The RuvB hexamer acts as an ATP-dependent pump, pulling dsDNA into and through the RuvAB complex. RuvB forms 2 homohexamers on either side of HJ DNA bound by 1 or 2 RuvA tetramers; 4 subunits per hexamer contact DNA at a time. Coordinated motions by a converter formed by DNA-disengaged RuvB subunits stimulates ATP hydrolysis and nucleotide exchange. Immobilization of the converter enables RuvB to convert the ATP-contained energy into a lever motion, pulling 2 nucleotides of DNA out of the RuvA tetramer per ATP hydrolyzed, thus driving DNA branch migration. The RuvB motors rotate together with the DNA substrate, which together with the progressing nucleotide cycle form the mechanistic basis for DNA recombination by continuous HJ branch migration. Branch migration allows RuvC to scan DNA until it finds its consensus sequence, where it cleaves and resolves cruciform DNA. This is Holliday junction branch migration complex subunit RuvB from Caldanaerobacter subterraneus subsp. tengcongensis (strain DSM 15242 / JCM 11007 / NBRC 100824 / MB4) (Thermoanaerobacter tengcongensis).